Consider the following 326-residue polypeptide: Glutaminase 2 (326 aa).

Substrate-binding residues include Ser73, Asn125, Glu169, Asn176, Tyr200, Tyr252, and Val270.

This sequence belongs to the glutaminase family. Homotetramer.

It catalyses the reaction L-glutamine + H2O = L-glutamate + NH4(+). This chain is Glutaminase 2, found in Bacillus anthracis.